The primary structure comprises 219 residues: Probable glutathione S-transferase MSR-1 (219 aa).

In terms of domain architecture, GST N-terminal spans 4–83 (NNVVLLDFSG…YIDEVWHEKC (80 aa)). Residues S14, K41, I55, and 67-68 (ES) contribute to the glutathione site. The 120-residue stretch at 89–208 (DPYQRSQARF…LPHPHKIYDF (120 aa)) folds into the GST C-terminal domain.

The protein belongs to the GST superfamily. HSP26 family.

It catalyses the reaction RX + glutathione = an S-substituted glutathione + a halide anion + H(+). Functionally, may play an important role in hormonal and growth regulatory responses. The polypeptide is Probable glutathione S-transferase MSR-1 (MSR-1) (Nicotiana plumbaginifolia (Leadwort-leaved tobacco)).